The following is a 336-amino-acid chain: Tetraacyldisaccharide 4'-kinase (336 aa).

60-67 contributes to the ATP binding site; that stretch reads TVGGTGKT.

This sequence belongs to the LpxK family.

The catalysed reaction is a lipid A disaccharide + ATP = a lipid IVA + ADP + H(+). The protein operates within glycolipid biosynthesis; lipid IV(A) biosynthesis; lipid IV(A) from (3R)-3-hydroxytetradecanoyl-[acyl-carrier-protein] and UDP-N-acetyl-alpha-D-glucosamine: step 6/6. Transfers the gamma-phosphate of ATP to the 4'-position of a tetraacyldisaccharide 1-phosphate intermediate (termed DS-1-P) to form tetraacyldisaccharide 1,4'-bis-phosphate (lipid IVA). In Pseudomonas fluorescens (strain Pf0-1), this protein is Tetraacyldisaccharide 4'-kinase.